We begin with the raw amino-acid sequence, 449 residues long: MLNYTELENKNVLVVGLAKSGYEAAKLLLKLGANVKVNDGKDLSQDAHAKDLESMGIEVISGSHPFSLLDDNPIIVKNPGIPYTVSIIEEAAKRGLKILTEVELSYLISEAPIIAVTGTNGKTTVTSLIGDMFQKSVLTGRLSGNIGYVASNVAQEVKSDEYLITELSSFQLLGIEKYKPHIAIITNIYSAHLDYHETLENYQNAKKQIYKNQTKDDYLICNYHQRHLIESENLEAKTFYFSTQQEVDGIYIKDGFIVFNGIRIINTKDLVLPGEHNLENILAAVLASIIAGVPVKAIVDSLVTFSGIDHRLQYIGTNRTNKYYNDSKATNTLATQFALNSFDQPIIWLCGGLDRGNEFDELIPYMENVRVMVVFGETQDKFAKLGNSQGKYVIKATDVEDAVDKIQDIVEPNDVVLLSPACASWDQYHTFEERGEKFIDRFRAHLPSY.

118–124 (GTNGKTT) serves as a coordination point for ATP.

Belongs to the MurCDEF family.

The protein resides in the cytoplasm. The catalysed reaction is UDP-N-acetyl-alpha-D-muramoyl-L-alanine + D-glutamate + ATP = UDP-N-acetyl-alpha-D-muramoyl-L-alanyl-D-glutamate + ADP + phosphate + H(+). Its pathway is cell wall biogenesis; peptidoglycan biosynthesis. Functionally, cell wall formation. Catalyzes the addition of glutamate to the nucleotide precursor UDP-N-acetylmuramoyl-L-alanine (UMA). The sequence is that of UDP-N-acetylmuramoylalanine--D-glutamate ligase from Staphylococcus epidermidis (strain ATCC 35984 / DSM 28319 / BCRC 17069 / CCUG 31568 / BM 3577 / RP62A).